Consider the following 1097-residue polypeptide: DNA-directed RNA polymerase subunit beta (1097 aa).

The interval 1072-1097 is disordered; that stretch reads QDINPRRNTPSRPTYESLGTSEYEED. Residues 1077–1091 are compositionally biased toward polar residues; the sequence is RRNTPSRPTYESLGT.

Belongs to the RNA polymerase beta chain family. In terms of assembly, in cyanobacteria the RNAP catalytic core is composed of 2 alpha, 1 beta, 1 beta', 1 gamma and 1 omega subunit. When a sigma factor is associated with the core the holoenzyme is formed, which can initiate transcription.

It carries out the reaction RNA(n) + a ribonucleoside 5'-triphosphate = RNA(n+1) + diphosphate. In terms of biological role, DNA-dependent RNA polymerase catalyzes the transcription of DNA into RNA using the four ribonucleoside triphosphates as substrates. The protein is DNA-directed RNA polymerase subunit beta of Prochlorococcus marinus (strain MIT 9215).